A 389-amino-acid polypeptide reads, in one-letter code: S-adenosylmethionine synthase (389 aa).

H17 provides a ligand contact to ATP. Mg(2+) is bound at residue D19. E45 contacts K(+). E58 and Q102 together coordinate L-methionine. Positions 102–112 (QSADIAQGVDA) are flexible loop. ATP contacts are provided by residues 167 to 169 (DAK), D241, 247 to 248 (RK), A264, and K268. D241 serves as a coordination point for L-methionine. K272 lines the L-methionine pocket.

This sequence belongs to the AdoMet synthase family. As to quaternary structure, homotetramer; dimer of dimers. Requires Mg(2+) as cofactor. K(+) is required as a cofactor.

The protein localises to the cytoplasm. It catalyses the reaction L-methionine + ATP + H2O = S-adenosyl-L-methionine + phosphate + diphosphate. It participates in amino-acid biosynthesis; S-adenosyl-L-methionine biosynthesis; S-adenosyl-L-methionine from L-methionine: step 1/1. In terms of biological role, catalyzes the formation of S-adenosylmethionine (AdoMet) from methionine and ATP. The overall synthetic reaction is composed of two sequential steps, AdoMet formation and the subsequent tripolyphosphate hydrolysis which occurs prior to release of AdoMet from the enzyme. The sequence is that of S-adenosylmethionine synthase from Parvibaculum lavamentivorans (strain DS-1 / DSM 13023 / NCIMB 13966).